A 266-amino-acid chain; its full sequence is Agamous-like MADS-box protein AGL97 (266 aa).

The MADS-box domain occupies 3 to 63 (GVKRKIAIEK…SNSNAAFYSF (61 aa)). Residues 88-130 (WEDESLLKSENLEELREAMDSMSTMLRDLKELEKQRDHQTQTL) adopt a coiled-coil conformation.

Interacts with AGL27 and AGL62.

Its subcellular location is the nucleus. In terms of biological role, putative transcription factor. This Arabidopsis thaliana (Mouse-ear cress) protein is Agamous-like MADS-box protein AGL97 (AGL97).